A 110-amino-acid chain; its full sequence is Suppressor of silencing 2b (110 aa).

The tract at residues 16 to 45 (ARMVEAKKQRRRSHKQNRRERGHKSPSERA) is disordered. Residues 22–27 (KKQRRR) carry the Nuclear localization signal motif. Basic residues predominate over residues 23–37 (KQRRRSHKQNRRERG).

It belongs to the cucumovirus/ilarvirus protein 2b family. Homotetramer. Interacts with host AGO1; this interaction blocks AGO1 cleavage activity to attenuate RNA silencing and thus counter host defense. Interacts with host JAZ.

Its subcellular location is the host nucleus. In terms of biological role, multifunctional protein that plays two independent roles: viral suppressor of host RNAi (VSR) and viral inducer of host attractiveness to insect vectors (VIA). Acts as a suppressor of RNA-mediated gene silencing, also known as post-transcriptional gene silencing (PTGS), a mechanism of plant viral defense that limits the accumulation of viral RNAs. May directly interfere with mobile silencing signaling. Also inhibits signal transduction by the phytohormone jasmonate, making the infected plant more attractive to aphids, which are the second host to play a role as a dissemination vector. Acts by binding to and inhibiting JAZ degradation in the host. The polypeptide is Suppressor of silencing 2b (Cucurbita pepo (Vegetable marrow)).